Reading from the N-terminus, the 697-residue chain is MQTQEILRILRLPELGDLGQFFRSLSATTLVSMGALAAILAYWFTHRPKALQPPCNLLMQSEEVEDSGGARRSVIGSGPQLLTHYYDDARTMYQVFRRGLSISGNGPCLGFRKPKQPYQWLSYQEVADRAEFLGSGLLQHNCKACTDQFIGVFAQNRPEWIIVELACYTYSMVVVPLYDTLGPGAIRYIINTADISTVIVDKPQKAVLLLEHVERKETPGLKLIILMDPFEEALKERGQKCGVVIKSMQAVEDCGQENHQAPVPPQPDDLSIVCFTSGTTGNPKGAMLTHGNVVADFSGFLKVTEKVIFPRQDDVLISFLPLAHMFERVIQSVVYCHGGRVGFFQGDIRLLSDDMKALCPTIFPVVPRLLNRMYDKIFSQANTPLKRWLLEFAAKRKQAEVRSGIIRNDSIWDELFFNKIQASLGGCVRMIVTGAAPASPTVLGFLRAALGCQVYEGYGQTECTAGCTFTTPGDWTSGHVGAPLPCNHIKLVDVEELNYWACKGEGEICVRGPNVFKGYLKDPDRTKEALDSDGWLHTGDIGKWLPAGTLKIIDRKKHIFKLAQGEYVAPEKIENIYIRSQPVAQIYVHGDSLKAFLVGIVVPDPEVMPSWAQKRGIEGTYADLCTNKDLKKAILEDMVRLGKESGLHSFEQVKAIHIHSDMFSVQNGLLTPTLKAKRPELREYFKKQIEELYSISM.

The chain crosses the membrane as a helical; Signal-anchor for type III membrane protein span at residues Leu-25–Thr-45. The Cytoplasmic portion of the chain corresponds to His-46–Met-697.

This sequence belongs to the ATP-dependent AMP-binding enzyme family. It depends on Mg(2+) as a cofactor. In terms of tissue distribution, expressed predominantly in erythrocyte precursors, in particular in reticulocytes, fetal blood cells derived from fetal liver, hemopoietic stem cells from cord blood, bone marrow and brain.

It localises to the mitochondrion outer membrane. The protein resides in the peroxisome membrane. It is found in the microsome membrane. The protein localises to the endoplasmic reticulum membrane. It catalyses the reaction a long-chain fatty acid + ATP + CoA = a long-chain fatty acyl-CoA + AMP + diphosphate. It carries out the reaction (5Z,8Z,11Z,14Z)-eicosatetraenoate + ATP + CoA = (5Z,8Z,11Z,14Z)-eicosatetraenoyl-CoA + AMP + diphosphate. The enzyme catalyses hexadecanoate + ATP + CoA = hexadecanoyl-CoA + AMP + diphosphate. The catalysed reaction is (E)-hexadec-2-enoate + ATP + CoA = (2E)-hexadecenoyl-CoA + AMP + diphosphate. It catalyses the reaction 15-hydroxy-(5Z,8Z,11Z,13E)-eicosatetraenoate + ATP + CoA = 15-hydroxy-(5Z,8Z,11Z,13E)-eicosatetraenoyl-CoA + AMP + diphosphate. It carries out the reaction 12-hydroxy-(5Z,8Z,10E,14Z)-eicosatetraenoate + ATP + CoA = 12-hydroxy-(5Z,8Z,10E,14Z)-eicosatetraenoyl-CoA + AMP + diphosphate. The enzyme catalyses 5-hydroxy-(6E,8Z,11Z,14Z)-eicosatetraenoate + ATP + CoA = 5-hydroxy-(6E,8Z,11Z,14Z)-eicosatetraenoyl-CoA + AMP + diphosphate. Its function is as follows. Catalyzes the conversion of long-chain fatty acids to their active form acyl-CoA for both synthesis of cellular lipids, and degradation via beta-oxidation. Plays an important role in fatty acid metabolism in brain and the acyl-CoAs produced may be utilized exclusively for the synthesis of the brain lipid. The protein is Long-chain-fatty-acid--CoA ligase 6 of Homo sapiens (Human).